A 192-amino-acid chain; its full sequence is Thymidine kinase (192 aa).

ATP contacts are provided by residues 9-16 (SSMNAGKS) and 87-90 (DEAQ). Glu-88 (proton acceptor) is an active-site residue. Residues Cys-145, Cys-147, Cys-182, and His-185 each coordinate Zn(2+).

This sequence belongs to the thymidine kinase family. As to quaternary structure, homotetramer.

Its subcellular location is the cytoplasm. It carries out the reaction thymidine + ATP = dTMP + ADP + H(+). This chain is Thymidine kinase, found in Colwellia psychrerythraea (strain 34H / ATCC BAA-681) (Vibrio psychroerythus).